Here is a 69-residue protein sequence, read N- to C-terminus: MNQGNQAFENARKPFRRANLITALGLGAFAFATFAYSVYRVHEDTFEDVVMTPELEKKIAEDRDLSKKN.

Topologically, residues 1–19 (MNQGNQAFENARKPFRRAN) are mitochondrial matrix. The chain crosses the membrane as a helical span at residues 20–42 (LITALGLGAFAFATFAYSVYRVH). The Mitochondrial intermembrane segment spans residues 43–69 (EDTFEDVVMTPELEKKIAEDRDLSKKN).

Belongs to the COA3 family. As to quaternary structure, component of 250-400 kDa complexes called cytochrome oxidase assembly intermediates or COA complexes.

The protein localises to the mitochondrion inner membrane. Functionally, required for assembly of cytochrome c oxidase (complex IV). The sequence is that of Cytochrome c oxidase assembly factor 3, mitochondrial (coa3) from Schizosaccharomyces pombe (strain 972 / ATCC 24843) (Fission yeast).